Reading from the N-terminus, the 1030-residue chain is Probable serine/threonine-protein kinase SIS8 (1030 aa).

2 stretches are compositionally biased toward polar residues: residues 44–58 (PNQSDEAEGSISTTK) and 399–419 (YSASPGDNDSIHVASSSNGIE). Disordered regions lie at residues 44–84 (PNQS…PEIK), 399–474 (YSAS…KAPF), 555–625 (TVES…ASST), and 689–736 (LGSN…SDCD). Composition is skewed to basic and acidic residues over residues 426–435 (TEFRTGEHRS), 458–471 (ISREDVKNQKKVEK), and 560–580 (NSTEAKKERGKDLETTQEGRH). Over residues 613-625 (SQSDSSHSEASST) the composition is skewed to low complexity. The 256-residue stretch at 748 to 1003 (ITVGERIGLG…AEIMASLKRL (256 aa)) folds into the Protein kinase domain. Residues 754 to 762 (IGLGSYGEV) and K775 contribute to the ATP site. D871 serves as the catalytic Proton acceptor. A compositionally biased stretch (polar residues) spans 1007–1023 (VTGSNIPRPVPSSSSLP). The disordered stretch occupies residues 1007 to 1030 (VTGSNIPRPVPSSSSLPTEHEQKD).

Belongs to the protein kinase superfamily. Ser/Thr protein kinase family. In terms of assembly, interacts with UGT72E1. As to expression, expressed roots, rosette and cauline leaves, and at lower levels in flowers and siliques.

It is found in the nucleus. It carries out the reaction L-seryl-[protein] + ATP = O-phospho-L-seryl-[protein] + ADP + H(+). The catalysed reaction is L-threonyl-[protein] + ATP = O-phospho-L-threonyl-[protein] + ADP + H(+). Its function is as follows. Acts as a negative regulator of salt tolerance. Mediates sugar response during early seedling development. This chain is Probable serine/threonine-protein kinase SIS8, found in Arabidopsis thaliana (Mouse-ear cress).